The chain runs to 439 residues: Oocyte zinc finger protein XlCOF28 (439 aa).

9 C2H2-type zinc fingers span residues 6-28, 34-56, 62-84, 90-112, 118-140, 146-168, 174-196, 202-224, and 230-252; these read YECT…QRTH, FKCT…KKCH, YMCT…IRTH, FTCT…LRIH, HKCN…QRTH, FQCT…LRIH, YKCS…QRTH, FQCS…ERTH, and YKCS…QKTH. Disordered stretches follow at residues 246–275 and 285–304; these read KLHQ…APKT and AGLE…ESPE. 4 C2H2-type zinc fingers span residues 333-355, 361-383, 389-411, and 417-439; these read HKCT…QRTH, FKCS…RKIH, YTCA…RRTH, and YICA…QRIH.

Belongs to the krueppel C2H2-type zinc-finger protein family.

The protein resides in the nucleus. In terms of biological role, may be involved in transcriptional regulation. In Xenopus laevis (African clawed frog), this protein is Oocyte zinc finger protein XlCOF28.